Consider the following 1007-residue polypeptide: Beta-galactosidase A (1007 aa).

Residues 1–18 (MKLSSACAIALLAAQAAG) form the signal peptide. Residues tyrosine 96 and 140-142 (NAE) contribute to the substrate site. N-linked (GlcNAc...) asparagine glycosylation is present at asparagine 156. Asparagine 199 contacts substrate. Glutamate 200 functions as the Proton donor in the catalytic mechanism. 2 disulfides stabilise this stretch: cysteine 205–cysteine 206 and cysteine 266–cysteine 315. Glutamate 298 (nucleophile) is an active-site residue. Position 364 (tyrosine 364) interacts with substrate. Asparagine 402, asparagine 422, asparagine 478, asparagine 522, asparagine 622, asparagine 739, asparagine 760, asparagine 777, asparagine 805, and asparagine 914 each carry an N-linked (GlcNAc...) asparagine glycan.

The protein belongs to the glycosyl hydrolase 35 family.

The protein localises to the secreted. It catalyses the reaction Hydrolysis of terminal non-reducing beta-D-galactose residues in beta-D-galactosides.. Cleaves beta-linked terminal galactosyl residues from gangliosides, glycoproteins, and glycosaminoglycans. The chain is Beta-galactosidase A (lacA) from Aspergillus niger (strain ATCC MYA-4892 / CBS 513.88 / FGSC A1513).